The sequence spans 129 residues: MYKTGILNSDISKVLSDLGHTDQIVIADCGLPVPKDVKKIDLALTLGQPSFLEVYEVLKQHMEIEHVTIAEEMEVDNAPIFEQVTKDFSEIEQVNHETFKALTKNAKAIIRTGEATPYANIILQSGVIF.

Catalysis depends on His20, which acts as the Proton donor. Residues Asp28, His96, and 118–120 contribute to the substrate site; that span reads YAN.

It belongs to the RbsD / FucU family. RbsD subfamily. In terms of assembly, homodecamer.

It is found in the cytoplasm. The enzyme catalyses beta-D-ribopyranose = beta-D-ribofuranose. It functions in the pathway carbohydrate metabolism; D-ribose degradation; D-ribose 5-phosphate from beta-D-ribopyranose: step 1/2. In terms of biological role, catalyzes the interconversion of beta-pyran and beta-furan forms of D-ribose. This Staphylococcus haemolyticus (strain JCSC1435) protein is D-ribose pyranase.